We begin with the raw amino-acid sequence, 365 residues long: Heme A synthase (365 aa).

5 helical membrane-spanning segments follow: residues 23 to 43 (LLRI…LVGG), 109 to 129 (LLAR…WLTG), 137 to 157 (LPLV…WWMV), 172 to 192 (LATH…ILRG), and 208 to 228 (GFAA…ALVA). Heme is bound at residue histidine 272. The next 3 helical transmembrane spans lie at 274–294 (LGAY…ARAL), 303–323 (AVLF…TLLM), and 327–347 (IHVA…SVAH). Histidine 333 is a heme binding site.

The protein belongs to the COX15/CtaA family. Type 2 subfamily. Interacts with CtaB. Heme b serves as cofactor.

The protein localises to the cell membrane. It catalyses the reaction Fe(II)-heme o + 2 A + H2O = Fe(II)-heme a + 2 AH2. Its pathway is porphyrin-containing compound metabolism; heme A biosynthesis; heme A from heme O: step 1/1. Catalyzes the conversion of heme O to heme A by two successive hydroxylations of the methyl group at C8. The first hydroxylation forms heme I, the second hydroxylation results in an unstable dihydroxymethyl group, which spontaneously dehydrates, resulting in the formyl group of heme A. In Agrobacterium fabrum (strain C58 / ATCC 33970) (Agrobacterium tumefaciens (strain C58)), this protein is Heme A synthase.